A 283-amino-acid chain; its full sequence is Large ribosomal subunit protein uL2 (283 aa).

A disordered region spans residues 215 to 283 (RHKGIRPTVR…IRGRKKRINN (69 aa)). Residues 274–283 (IRGRKKRINN) are compositionally biased toward basic residues.

The protein belongs to the universal ribosomal protein uL2 family. As to quaternary structure, part of the 50S ribosomal subunit. Forms a bridge to the 30S subunit in the 70S ribosome.

In terms of biological role, one of the primary rRNA binding proteins. Required for association of the 30S and 50S subunits to form the 70S ribosome, for tRNA binding and peptide bond formation. It has been suggested to have peptidyltransferase activity; this is somewhat controversial. Makes several contacts with the 16S rRNA in the 70S ribosome. The sequence is that of Large ribosomal subunit protein uL2 from Mycoplasma mobile (strain ATCC 43663 / 163K / NCTC 11711) (Mesomycoplasma mobile).